The primary structure comprises 302 residues: Glutaminase (302 aa).

The substrate site is built by serine 61, asparagine 111, glutamate 155, asparagine 162, tyrosine 186, tyrosine 238, and valine 256.

It belongs to the glutaminase family. As to quaternary structure, homotetramer.

It carries out the reaction L-glutamine + H2O = L-glutamate + NH4(+). This is Glutaminase from Pseudomonas aeruginosa (strain ATCC 15692 / DSM 22644 / CIP 104116 / JCM 14847 / LMG 12228 / 1C / PRS 101 / PAO1).